Consider the following 384-residue polypeptide: 1-deoxy-D-xylulose 5-phosphate reductoisomerase (384 aa).

Positions 10, 11, 12, 13, 36, and 122 each coordinate NADPH. Residue K123 participates in 1-deoxy-D-xylulose 5-phosphate binding. E124 is a binding site for NADPH. Mn(2+) is bound at residue D148. Positions 149, 150, 174, and 197 each coordinate 1-deoxy-D-xylulose 5-phosphate. E150 is a Mn(2+) binding site. G203 contacts NADPH. 1-deoxy-D-xylulose 5-phosphate-binding residues include S210, N215, K216, and E219. Residue E219 coordinates Mn(2+).

Belongs to the DXR family. The cofactor is Mg(2+). Mn(2+) is required as a cofactor.

It carries out the reaction 2-C-methyl-D-erythritol 4-phosphate + NADP(+) = 1-deoxy-D-xylulose 5-phosphate + NADPH + H(+). It functions in the pathway isoprenoid biosynthesis; isopentenyl diphosphate biosynthesis via DXP pathway; isopentenyl diphosphate from 1-deoxy-D-xylulose 5-phosphate: step 1/6. Its function is as follows. Catalyzes the NADPH-dependent rearrangement and reduction of 1-deoxy-D-xylulose-5-phosphate (DXP) to 2-C-methyl-D-erythritol 4-phosphate (MEP). The chain is 1-deoxy-D-xylulose 5-phosphate reductoisomerase from Chlorobium phaeobacteroides (strain DSM 266 / SMG 266 / 2430).